Here is a 477-residue protein sequence, read N- to C-terminus: Stromelysin-1 (477 aa).

Residues 1–17 (MKGLPVLLWLCVVVCSS) form the signal peptide. Positions 18–99 (YPLHDSARDD…PRCGVPDVGG (82 aa)) are cleaved as a propeptide — activation peptide. Residues 90-97 (PRCGVPDV) carry the Cysteine switch motif. C92 provides a ligand contact to Zn(2+). 2 residues coordinate Ca(2+): D124 and D158. 2 residues coordinate Zn(2+): H168 and D170. 4 residues coordinate Ca(2+): D175, G176, G178, and V180. Position 183 (H183) interacts with Zn(2+). Positions 190, 192, and 194 each coordinate Ca(2+). H196 contacts Zn(2+). Residues D198, D199, and E201 each coordinate Ca(2+). H218 is a binding site for Zn(2+). The active site involves E219. 2 residues coordinate Zn(2+): H222 and H228. 4 Hemopexin repeats span residues 287–336 (SPMC…WPSL), 337–383 (PSNM…GLPA), 385–433 (VKKI…FPGV), and 434–477 (DSRV…WFNC). C290 and C477 form a disulfide bridge. D297 contributes to the Ca(2+) binding site. Residues D389 and D438 each contribute to the Ca(2+) site.

The protein belongs to the peptidase M10A family. Ca(2+) serves as cofactor. Requires Zn(2+) as cofactor.

The protein resides in the secreted. It is found in the extracellular space. It localises to the extracellular matrix. The enzyme catalyses Preferential cleavage where P1', P2' and P3' are hydrophobic residues.. In terms of biological role, metalloproteinase with a rather broad substrate specificity that can degrade fibronectin, laminin, gelatins of type I, III, IV, and V; collagens III, IV, X, and IX, and cartilage proteoglycans. Activates different molecules including growth factors, plasminogen or other matrix metalloproteinases such as MMP9. Once released into the extracellular matrix (ECM), the inactive pro-enzyme is activated by the plasmin cascade signaling pathway. Also acts intracellularly. For example, in dopaminergic neurons, gets activated by the serine protease HTRA2 upon stress and plays a pivotal role in DA neuronal degeneration by mediating microglial activation and alpha-synuclein/SNCA cleavage. In addition, plays a role in immune response and possesses antiviral activity against various viruses. Mechanistically, translocates from the cytoplasm into the cell nucleus upon virus infection to influence NF-kappa-B activities. The polypeptide is Stromelysin-1 (Mmp3) (Mus musculus (Mouse)).